We begin with the raw amino-acid sequence, 171 residues long: Adenine phosphoribosyltransferase (171 aa).

Belongs to the purine/pyrimidine phosphoribosyltransferase family. As to quaternary structure, homodimer.

The protein resides in the cytoplasm. The enzyme catalyses AMP + diphosphate = 5-phospho-alpha-D-ribose 1-diphosphate + adenine. It participates in purine metabolism; AMP biosynthesis via salvage pathway; AMP from adenine: step 1/1. Functionally, catalyzes a salvage reaction resulting in the formation of AMP, that is energically less costly than de novo synthesis. The protein is Adenine phosphoribosyltransferase of Geotalea daltonii (strain DSM 22248 / JCM 15807 / FRC-32) (Geobacter daltonii).